Here is a 660-residue protein sequence, read N- to C-terminus: Acyl-coenzyme A oxidase acox-1.3 (660 aa).

FAD contacts are provided by residues Y146–T149, G154–T155, and G188. Substrate contacts are provided by residues K282 to Y285 and R292. FAD-binding positions include R317 and Q337 to R340. 4 residues coordinate ATP: H339, S389, H393, and Q401. Y430–E431 is a binding site for substrate. E431 functions as the Proton acceptor in the catalytic mechanism. Position 433 (E433) interacts with FAD. ATP contacts are provided by residues R524–R527 and Y572. Positions A658–L660 match the Microbody targeting signal motif.

It belongs to the acyl-CoA oxidase family. In terms of assembly, forms a heterodimer with acox-1.1; the interaction may be important for the stability of acox-1.3. The cofactor is FAD.

It localises to the peroxisome. The enzyme catalyses asc-C7-CoA + O2 = asc-DeltaC7-CoA + H2O2. It participates in lipid metabolism; peroxisomal fatty acid beta-oxidation. Activated by ATP. ATP binding leads to a conformational change that promotes FAD cofactor binding and enzyme activity. ATP binding likely occurs during acox-1.3 folding and/or dimer formation. Functionally, involved in the first step of peroxisomal beta-oxidation by catalyzing the desaturation of fatty acid-derived side chains of ascaroside pheromones, which regulates development and behavior. Specifically, shortens ascarosides with a 7-carbon side chain (asc-C7). Does not catalyze the desaturation of fatty acids or hydroxylated fatty acids. Involved in the biosynthesis of asc-C6-MK (daumone 2) and asc-delta-C9 (daumone 3) but not asc-C7 (daumone 1); daumones are pheromones produced during unfavourable growth conditions which promote entry into the dauer stage. This chain is Acyl-coenzyme A oxidase acox-1.3, found in Caenorhabditis elegans.